Consider the following 221-residue polypeptide: Probable septum site-determining protein MinC (221 aa).

The protein belongs to the MinC family. As to quaternary structure, interacts with MinD and FtsZ.

Cell division inhibitor that blocks the formation of polar Z ring septums. Rapidly oscillates between the poles of the cell to destabilize FtsZ filaments that have formed before they mature into polar Z rings. Prevents FtsZ polymerization. This Aliivibrio fischeri (strain ATCC 700601 / ES114) (Vibrio fischeri) protein is Probable septum site-determining protein MinC.